Reading from the N-terminus, the 1377-residue chain is DNA-directed RNA polymerase subunit beta (1377 aa).

It belongs to the RNA polymerase beta chain family. As to quaternary structure, the RNAP catalytic core consists of 2 alpha, 1 beta, 1 beta' and 1 omega subunit. When a sigma factor is associated with the core the holoenzyme is formed, which can initiate transcription.

The enzyme catalyses RNA(n) + a ribonucleoside 5'-triphosphate = RNA(n+1) + diphosphate. Functionally, DNA-dependent RNA polymerase catalyzes the transcription of DNA into RNA using the four ribonucleoside triphosphates as substrates. The sequence is that of DNA-directed RNA polymerase subunit beta from Aromatoleum aromaticum (strain DSM 19018 / LMG 30748 / EbN1) (Azoarcus sp. (strain EbN1)).